The primary structure comprises 513 residues: Keratin, type II cuticular Hb2 (513 aa).

The interval 1–120 (MSYHSFQPGS…PTVQRVKRDE (120 aa)) is head. Positions 120–431 (EKEQIKCLNN…RLLEGEEHRL (312 aa)) constitute an IF rod domain. The tract at residues 121–155 (KEQIKCLNNRFASFINKVRFLEQKNKLLETKWNFM) is coil 1A. Positions 156 to 165 (QQQRCCQTNI) are linker 1. Residues 166-266 (EPIFEGYISA…YEEEICLLQS (101 aa)) form a coil 1B region. The segment at 267 to 283 (QISETSVIVKMDNSREL) is linker 12. The interval 284–427 (DVDGIIAEIK…ATYRRLLEGE (144 aa)) is coil 2. The tract at residues 428–513 (EHRLCEGIGP…AGGSSPSHKH (86 aa)) is tail.

The protein belongs to the intermediate filament family. Heterotetramer of two type I and two type II keratins.

The sequence is that of Keratin, type II cuticular Hb2 (KRT82) from Homo sapiens (Human).